The primary structure comprises 694 residues: Elongation factor G (694 aa).

The tr-type G domain occupies 9–288 (DAIRNIGIMA…VIVKWLPSPL (280 aa)). GTP contacts are provided by residues 18 to 25 (AHIDAGKT), 82 to 86 (DTPGH), and 136 to 139 (NKMD).

This sequence belongs to the TRAFAC class translation factor GTPase superfamily. Classic translation factor GTPase family. EF-G/EF-2 subfamily.

Its subcellular location is the cytoplasm. In terms of biological role, catalyzes the GTP-dependent ribosomal translocation step during translation elongation. During this step, the ribosome changes from the pre-translocational (PRE) to the post-translocational (POST) state as the newly formed A-site-bound peptidyl-tRNA and P-site-bound deacylated tRNA move to the P and E sites, respectively. Catalyzes the coordinated movement of the two tRNA molecules, the mRNA and conformational changes in the ribosome. The chain is Elongation factor G from Chlamydia trachomatis serovar L2 (strain ATCC VR-902B / DSM 19102 / 434/Bu).